A 199-amino-acid chain; its full sequence is Casparian strip membrane protein 2 (199 aa).

Residues 1-37 (MMRGSTEIDMPESSSVSKGTAPLIAAPMKEKGGYKKG) are Cytoplasmic-facing. A helical membrane pass occupies residues 38–58 (IAIFDFILRLAAIATALAAAA). Topologically, residues 59-87 (SMGTSDETLPFFTQFFQFQASYDDLPTFQ) are extracellular. The helical transmembrane segment at 88–108 (FFVIAMAIVAGYLVLSLPFSI) threads the bilayer. At 109-120 (VAIVRPHAAGPR) the chain is on the cytoplasmic side. The helical transmembrane segment at 121-141 (LLLIILDTVALTLNTAAGAAA) threads the bilayer. At 142 to 173 (AAIVYLAHNGNSSTNWLAICQQFGDFCQKNSG) the chain is on the extracellular side. N152 carries N-linked (GlcNAc...) asparagine glycosylation. A helical membrane pass occupies residues 174–194 (AVVASFITVVIFVFLLVLSAF). Residues 195–199 (ALRRH) lie on the Cytoplasmic side of the membrane.

Belongs to the Casparian strip membrane proteins (CASP) family. Homodimer and heterodimers.

Its subcellular location is the cell membrane. Functionally, regulates membrane-cell wall junctions and localized cell wall deposition. Required for establishment of the Casparian strip membrane domain (CSD) and the subsequent formation of Casparian strips, a cell wall modification of the root endodermis that determines an apoplastic barrier between the intraorganismal apoplasm and the extraorganismal apoplasm and prevents lateral diffusion. The polypeptide is Casparian strip membrane protein 2 (Populus trichocarpa (Western balsam poplar)).